The chain runs to 52 residues: uncharacterized protein (52 aa).

This is an uncharacterized protein from Rickettsia conorii (strain ATCC VR-613 / Malish 7).